Consider the following 389-residue polypeptide: Na(+)/H(+) antiporter NhaA 1 (389 aa).

Helical transmembrane passes span 12 to 32 (VLNE…ALLV), 62 to 82 (FLLW…GLEL), 97 to 117 (IVLP…LFVL), 128 to 148 (GWAI…MMCG), 157 to 177 (IFLL…IAIF), 184 to 204 (IVAF…NILG), 220 to 240 (ISVL…AFFI), 260 to 280 (FWLA…VNLS), 282 to 302 (IDIG…LFVG), 305 to 325 (AGVF…LPQG), 331 to 351 (LYGV…IDGL), and 365 to 385 (LAIL…LKFF).

The protein belongs to the NhaA Na(+)/H(+) (TC 2.A.33) antiporter family.

The protein localises to the cell inner membrane. It catalyses the reaction Na(+)(in) + 2 H(+)(out) = Na(+)(out) + 2 H(+)(in). Functionally, na(+)/H(+) antiporter that extrudes sodium in exchange for external protons. This Campylobacter jejuni subsp. jejuni serotype O:23/36 (strain 81-176) protein is Na(+)/H(+) antiporter NhaA 1.